The sequence spans 338 residues: 1-aminocyclopropane-1-carboxylate deaminase (338 aa).

Lys-51 carries the N6-(pyridoxal phosphate)lysine modification. Ser-78 acts as the Nucleophile in catalysis.

Belongs to the ACC deaminase/D-cysteine desulfhydrase family. As to quaternary structure, homotrimer. The cofactor is pyridoxal 5'-phosphate.

It catalyses the reaction 1-aminocyclopropane-1-carboxylate + H2O = 2-oxobutanoate + NH4(+). Catalyzes a cyclopropane ring-opening reaction, the irreversible conversion of 1-aminocyclopropane-1-carboxylate (ACC) to ammonia and alpha-ketobutyrate. Allows growth on ACC as a nitrogen source. The chain is 1-aminocyclopropane-1-carboxylate deaminase from Burkholderia pseudomallei (strain 1106a).